Here is a 481-residue protein sequence, read N- to C-terminus: Ankyrin repeat, SAM and basic leucine zipper domain-containing protein 1 (481 aa).

A compositionally biased stretch (gly residues) spans 1 to 16; that stretch reads MASGGLRGLAVAGGGE. The disordered stretch occupies residues 1-23; it reads MASGGLRGLAVAGGGESSDSEDD. Phosphoserine is present on residues Ser17, Ser18, and Ser20. 6 ANK repeats span residues 45 to 74, 78 to 107, 110 to 144, 148 to 177, 181 to 210, and 214 to 243; these read EKNETFKKALTTGDISLVQELLDSGISVDS, YGWTPLMYAASIANVELVRVLLDRGANASF, DKQTILITACSARGSEEQILKCVELLLSRNADPNV, RLMTPIMYAARDGHPQVVAVLVAHGAEVNT, NGYTALTWAARQGHKNVVLKLLELGANKML, and DGKIPSEIAKRNKHLEIFNFLSLTLNPLEG. One can recognise an SAM domain in the interval 272 to 334; sequence SYTAFGDLEI…KILSALKELE (63 aa).

Interacts with DDX4, PIWIL1, RANBP9 and TDRD1.

It is found in the cytoplasm. Its function is as follows. Plays a central role during spermatogenesis by repressing transposable elements and preventing their mobilization, which is essential for the germline integrity. Acts via the piRNA metabolic process, which mediates the repression of transposable elements during meiosis by forming complexes composed of piRNAs and Piwi proteins and governs the methylation and subsequent repression of transposons. Its association with pi-bodies suggests a participation in the primary piRNAs metabolic process. Required prior to the pachytene stage to facilitate the production of multiple types of piRNAs, including those associated with repeats involved in the regulation of retrotransposons. May act by mediating protein-protein interactions during germ cell maturation. This chain is Ankyrin repeat, SAM and basic leucine zipper domain-containing protein 1 (ASZ1), found in Microcebus murinus (Gray mouse lemur).